Reading from the N-terminus, the 78-residue chain is MSTAFRKIKLIFKKSDSQYPQNYRAEIKSRNKNTVITRHDLLIAHEMKQRASLERSNSIRNLQSQGKRRSDSKESRKL.

The tract at residues 49–78 (QRASLERSNSIRNLQSQGKRRSDSKESRKL) is disordered. Residues 54 to 65 (ERSNSIRNLQSQ) show a composition bias toward polar residues. A compositionally biased stretch (basic and acidic residues) spans 68-78 (RRSDSKESRKL).

This is an uncharacterized protein from Saccharomyces cerevisiae (strain ATCC 204508 / S288c) (Baker's yeast).